We begin with the raw amino-acid sequence, 326 residues long: 4-hydroxy-3-methylbut-2-enyl diphosphate reductase (326 aa).

Cys22 contributes to the [4Fe-4S] cluster binding site. (2E)-4-hydroxy-3-methylbut-2-enyl diphosphate-binding residues include His51 and His84. Residues His51 and His84 each contribute to the dimethylallyl diphosphate site. His51 and His84 together coordinate isopentenyl diphosphate. Residue Cys106 participates in [4Fe-4S] cluster binding. His134 contacts (2E)-4-hydroxy-3-methylbut-2-enyl diphosphate. His134 lines the dimethylallyl diphosphate pocket. An isopentenyl diphosphate-binding site is contributed by His134. Glu136 acts as the Proton donor in catalysis. Thr174 contributes to the (2E)-4-hydroxy-3-methylbut-2-enyl diphosphate binding site. Cys204 contributes to the [4Fe-4S] cluster binding site. (2E)-4-hydroxy-3-methylbut-2-enyl diphosphate contacts are provided by Ser232, Ser233, Asn234, and Ser276. Dimethylallyl diphosphate is bound by residues Ser232, Ser233, Asn234, and Ser276. Isopentenyl diphosphate contacts are provided by Ser232, Ser233, Asn234, and Ser276.

Belongs to the IspH family. [4Fe-4S] cluster serves as cofactor.

The enzyme catalyses isopentenyl diphosphate + 2 oxidized [2Fe-2S]-[ferredoxin] + H2O = (2E)-4-hydroxy-3-methylbut-2-enyl diphosphate + 2 reduced [2Fe-2S]-[ferredoxin] + 2 H(+). The catalysed reaction is dimethylallyl diphosphate + 2 oxidized [2Fe-2S]-[ferredoxin] + H2O = (2E)-4-hydroxy-3-methylbut-2-enyl diphosphate + 2 reduced [2Fe-2S]-[ferredoxin] + 2 H(+). Its pathway is isoprenoid biosynthesis; dimethylallyl diphosphate biosynthesis; dimethylallyl diphosphate from (2E)-4-hydroxy-3-methylbutenyl diphosphate: step 1/1. It participates in isoprenoid biosynthesis; isopentenyl diphosphate biosynthesis via DXP pathway; isopentenyl diphosphate from 1-deoxy-D-xylulose 5-phosphate: step 6/6. Its function is as follows. Catalyzes the conversion of 1-hydroxy-2-methyl-2-(E)-butenyl 4-diphosphate (HMBPP) into a mixture of isopentenyl diphosphate (IPP) and dimethylallyl diphosphate (DMAPP). Acts in the terminal step of the DOXP/MEP pathway for isoprenoid precursor biosynthesis. The sequence is that of 4-hydroxy-3-methylbut-2-enyl diphosphate reductase from Bordetella parapertussis (strain 12822 / ATCC BAA-587 / NCTC 13253).